The chain runs to 596 residues: Alkaline phosphatase 4 (596 aa).

A signal peptide spans Met-1 to Ala-20. Asp-93 contacts Mg(2+). Residue Asp-93 participates in Zn(2+) binding. The active-site Phosphoserine intermediate is Ser-144. Mg(2+) contacts are provided by His-202 and Thr-204. 2 N-linked (GlcNAc...) asparagine glycosylation sites follow: Asn-262 and Asn-297. Mg(2+) is bound at residue Glu-369. The Zn(2+) site is built by Asp-374 and His-378. An N-linked (GlcNAc...) asparagine glycan is attached at Asn-401. Zn(2+)-binding residues include Asp-415 and His-416. N-linked (GlcNAc...) asparagine glycans are attached at residues Asn-464 and Asn-470. His-504 contacts Zn(2+). Residues Cys-539 and Cys-550 are joined by a disulfide bond. Residues Asp-548–Asn-566 are compositionally biased toward basic and acidic residues. A disordered region spans residues Asp-548–Asn-570. The GPI-anchor amidated asparagine moiety is linked to residue Asn-570. The helical transmembrane segment at Gly-571–Leu-591 threads the bilayer. Residues Gly-571 to Leu-596 constitute a propeptide, removed in mature form.

It belongs to the alkaline phosphatase family. In terms of assembly, homodimer. It depends on Mg(2+) as a cofactor. Zn(2+) serves as cofactor. Ellipsoid body ring neurons in the adult brain and in the lower Malpighian tubule and ureter.

The protein resides in the cell membrane. The catalysed reaction is a phosphate monoester + H2O = an alcohol + phosphate. Its function is as follows. Important role in neural and renal epithelial function. The sequence is that of Alkaline phosphatase 4 from Drosophila melanogaster (Fruit fly).